A 231-amino-acid chain; its full sequence is Large ribosomal subunit protein uL1 (231 aa).

This sequence belongs to the universal ribosomal protein uL1 family. Part of the 50S ribosomal subunit.

Its function is as follows. Binds directly to 23S rRNA. The L1 stalk is quite mobile in the ribosome, and is involved in E site tRNA release. In terms of biological role, protein L1 is also a translational repressor protein, it controls the translation of the L11 operon by binding to its mRNA. The protein is Large ribosomal subunit protein uL1 of Janthinobacterium sp. (strain Marseille) (Minibacterium massiliensis).